A 158-amino-acid polypeptide reads, in one-letter code: Transcription elongation factor GreA (158 aa).

Belongs to the GreA/GreB family.

In terms of biological role, necessary for efficient RNA polymerase transcription elongation past template-encoded arresting sites. The arresting sites in DNA have the property of trapping a certain fraction of elongating RNA polymerases that pass through, resulting in locked ternary complexes. Cleavage of the nascent transcript by cleavage factors such as GreA or GreB allows the resumption of elongation from the new 3'terminus. GreA releases sequences of 2 to 3 nucleotides. This chain is Transcription elongation factor GreA, found in Polaromonas naphthalenivorans (strain CJ2).